Here is a 309-residue protein sequence, read N- to C-terminus: tRNA uridine(34) hydroxylase (309 aa).

The region spanning 130 to 224 (SDPDTIVIDT…YLEEVPQEES (95 aa)) is the Rhodanese domain. C184 functions as the Cysteine persulfide intermediate in the catalytic mechanism.

It belongs to the TrhO family.

The enzyme catalyses uridine(34) in tRNA + AH2 + O2 = 5-hydroxyuridine(34) in tRNA + A + H2O. In terms of biological role, catalyzes oxygen-dependent 5-hydroxyuridine (ho5U) modification at position 34 in tRNAs. The sequence is that of tRNA uridine(34) hydroxylase from Rhizobium leguminosarum bv. trifolii (strain WSM2304).